The sequence spans 278 residues: Bifunctional protein FolD (278 aa).

NADP(+)-binding positions include 165-167 (GRS), S190, and T231.

This sequence belongs to the tetrahydrofolate dehydrogenase/cyclohydrolase family. In terms of assembly, homodimer.

It catalyses the reaction (6R)-5,10-methylene-5,6,7,8-tetrahydrofolate + NADP(+) = (6R)-5,10-methenyltetrahydrofolate + NADPH. It carries out the reaction (6R)-5,10-methenyltetrahydrofolate + H2O = (6R)-10-formyltetrahydrofolate + H(+). It functions in the pathway one-carbon metabolism; tetrahydrofolate interconversion. Catalyzes the oxidation of 5,10-methylenetetrahydrofolate to 5,10-methenyltetrahydrofolate and then the hydrolysis of 5,10-methenyltetrahydrofolate to 10-formyltetrahydrofolate. The sequence is that of Bifunctional protein FolD from Clostridium acetobutylicum (strain ATCC 824 / DSM 792 / JCM 1419 / IAM 19013 / LMG 5710 / NBRC 13948 / NRRL B-527 / VKM B-1787 / 2291 / W).